The sequence spans 248 residues: Probable transcriptional regulatory protein BT_2363 (248 aa).

Belongs to the TACO1 family.

Its subcellular location is the cytoplasm. This chain is Probable transcriptional regulatory protein BT_2363, found in Bartonella tribocorum (strain CIP 105476 / IBS 506).